The following is a 368-amino-acid chain: Alkaline phosphatase L (368 aa).

Positions 1–23 (MFKRSLIAASLSVAALVSAQAMA) are cleaved as a signal peptide.

This sequence belongs to the PstS family. Homodimer.

It is found in the secreted. Its subcellular location is the periplasm. It catalyses the reaction a phosphate monoester + H2O = an alcohol + phosphate. Has both a phosphomonoesterase and phosphodiesterase activity. The chain is Alkaline phosphatase L from Pseudomonas aeruginosa (strain ATCC 15692 / DSM 22644 / CIP 104116 / JCM 14847 / LMG 12228 / 1C / PRS 101 / PAO1).